We begin with the raw amino-acid sequence, 47 residues long: Delta-halcutoxin-Hcg1a (47 aa).

Intrachain disulfides connect Cys-3–Cys-43, Cys-5–Cys-33, and Cys-26–Cys-44.

This sequence belongs to the sea anemone sodium channel inhibitory toxin family. Type II subfamily.

Its subcellular location is the secreted. It localises to the nematocyst. In terms of biological role, is potently lethal to crabs, although it showed neither lethal activity in mice nor hemolytic activity. May bind to voltage-gated sodium channels (Nav), thereby delaying their inactivation during signal transduction. This chain is Delta-halcutoxin-Hcg1a, found in Isohalcurias carlgreni (Sea anemone).